The following is a 648-amino-acid chain: Macrolide export ATP-binding/permease protein MacB (648 aa).

One can recognise an ABC transporter domain in the interval 5-243 (LELCNVSRSY…QGVDAAVVNT (239 aa)). 41–48 (GVSGSGKS) is a binding site for ATP. The next 5 helical transmembrane spans lie at 273 to 293 (LLTM…VVVG), 417 to 437 (ANVV…IGVA), 523 to 543 (LFLT…VMNI), 577 to 597 (VLVC…IAFM), and 611 to 631 (LTAL…FGWL).

Belongs to the ABC transporter superfamily. Macrolide exporter (TC 3.A.1.122) family. Homodimer. Part of the tripartite efflux system MacAB-TolC, which is composed of an inner membrane transporter, MacB, a periplasmic membrane fusion protein, MacA, and an outer membrane component, TolC. The complex forms a large protein conduit and can translocate molecules across both the inner and outer membranes. Interacts with MacA.

It is found in the cell inner membrane. Functionally, part of the tripartite efflux system MacAB-TolC. MacB is a non-canonical ABC transporter that contains transmembrane domains (TMD), which form a pore in the inner membrane, and an ATP-binding domain (NBD), which is responsible for energy generation. Confers resistance against macrolides. In Salmonella typhimurium (strain LT2 / SGSC1412 / ATCC 700720), this protein is Macrolide export ATP-binding/permease protein MacB.